The sequence spans 1342 residues: DNA-directed RNA polymerase subunit beta (1342 aa).

This sequence belongs to the RNA polymerase beta chain family. As to quaternary structure, the RNAP catalytic core consists of 2 alpha, 1 beta, 1 beta' and 1 omega subunit. When a sigma factor is associated with the core the holoenzyme is formed, which can initiate transcription.

It catalyses the reaction RNA(n) + a ribonucleoside 5'-triphosphate = RNA(n+1) + diphosphate. DNA-dependent RNA polymerase catalyzes the transcription of DNA into RNA using the four ribonucleoside triphosphates as substrates. The protein is DNA-directed RNA polymerase subunit beta of Enterobacter sp. (strain 638).